The following is a 239-amino-acid chain: Ribosomal RNA small subunit methyltransferase G (239 aa).

Residues G78, F83, 129 to 130 (AE), and R148 each bind S-adenosyl-L-methionine.

It belongs to the methyltransferase superfamily. RNA methyltransferase RsmG family.

The protein localises to the cytoplasm. Functionally, specifically methylates the N7 position of a guanine in 16S rRNA. This chain is Ribosomal RNA small subunit methyltransferase G, found in Alkaliphilus metalliredigens (strain QYMF).